Here is a 313-residue protein sequence, read N- to C-terminus: tRNA pseudouridine synthase B (313 aa).

The Nucleophile role is filled by D42.

It belongs to the pseudouridine synthase TruB family. Type 1 subfamily.

The catalysed reaction is uridine(55) in tRNA = pseudouridine(55) in tRNA. In terms of biological role, responsible for synthesis of pseudouridine from uracil-55 in the psi GC loop of transfer RNAs. The protein is tRNA pseudouridine synthase B of Prochlorococcus marinus (strain SARG / CCMP1375 / SS120).